The primary structure comprises 683 residues: Protein distal antenna (683 aa).

The 52-residue stretch at 7–58 (TKGKRPLRSLTPRDKIHAIQRIHDGESKASVARDIGVPESTLRGWCKNEDKL) folds into the HTH psq-type domain. Residues 34 to 54 (KASVARDIGVPESTLRGWCKN) constitute a DNA-binding region (H-T-H motif). Disordered stretches follow at residues 220 to 255 (TANN…SVKN), 336 to 369 (SPPI…TPSG), 443 to 525 (SETP…SDCI), 572 to 597 (NQHS…DEEE), and 652 to 683 (EPQV…RRRK). Residues 227 to 242 (SKPSVQPPLQVQSPRS) show a composition bias toward low complexity. Polar residues-rich tracts occupy residues 338-352 (PIRS…QHAQ) and 445-460 (TPSV…NQLD). The span at 462-478 (IEGDEVTDPDLDAEIEG) shows a compositional bias: acidic residues. The segment covering 575-591 (SNNNDISASNNNNNNSN) has biased composition (low complexity).

In terms of assembly, homomers. Interacts with itself, danr, ey and dac to form a complex (or complexes) containing the RD factors.

It is found in the nucleus. In terms of biological role, probable transcription factor with a role in the retinal determination (RD) network. Regulates ato expression and is required for normal R8 induction and differentiation. Danr appears to repress Dan expression, but Dan is required for Danr expression anterior to the morphogenetic furrow (MF). Dan and Danr lie downstream of so and require dac function for highest levels of expression. Contributes to differentiation of antenna-specific characteristics; effector gene that acts downstream of homothorax (hth), Distal-less (Dll), cut (ct) and spineless (ss) genes to control differentiation of distal antennal structures. The polypeptide is Protein distal antenna (Drosophila pseudoobscura pseudoobscura (Fruit fly)).